The sequence spans 327 residues: Beta-ketoacyl-[acyl-carrier-protein] synthase III 2 (327 aa).

Residues Cys114 and His251 contribute to the active site. The segment at 252 to 256 (SANLR) is ACP-binding. The active site involves Asn281.

It belongs to the thiolase-like superfamily. FabH family. Homodimer.

The protein localises to the cytoplasm. It carries out the reaction malonyl-[ACP] + acetyl-CoA + H(+) = 3-oxobutanoyl-[ACP] + CO2 + CoA. Its pathway is lipid metabolism; fatty acid biosynthesis. Functionally, catalyzes the condensation reaction of fatty acid synthesis by the addition to an acyl acceptor of two carbons from malonyl-ACP. Catalyzes the first condensation reaction which initiates fatty acid synthesis and may therefore play a role in governing the total rate of fatty acid production. Possesses both acetoacetyl-ACP synthase and acetyl transacylase activities. Its substrate specificity determines the biosynthesis of branched-chain and/or straight-chain of fatty acids. This is Beta-ketoacyl-[acyl-carrier-protein] synthase III 2 from Bacillus cereus (strain ATCC 14579 / DSM 31 / CCUG 7414 / JCM 2152 / NBRC 15305 / NCIMB 9373 / NCTC 2599 / NRRL B-3711).